The following is a 360-amino-acid chain: Putative F-box protein At5g55150 (360 aa).

One can recognise an F-box domain in the interval 6 to 54; it reads SSWSEFLPELLNTVFHNLNDARDILNCATVCSSWKDSSSAVYYSRTFSP.

This is Putative F-box protein At5g55150 from Arabidopsis thaliana (Mouse-ear cress).